Here is a 127-residue protein sequence, read N- to C-terminus: Protein ApaG (127 aa).

Positions 3 to 127 (DDPRYRVEVE…FVLSVPRTLH (125 aa)) constitute an ApaG domain.

The chain is Protein ApaG from Xanthomonas campestris pv. campestris (strain 8004).